Here is a 169-residue protein sequence, read N- to C-terminus: S-ribosylhomocysteine lyase (169 aa).

Residues His54, His58, and Cys128 each contribute to the Fe cation site.

It belongs to the LuxS family. As to quaternary structure, homodimer. Fe cation is required as a cofactor.

It carries out the reaction S-(5-deoxy-D-ribos-5-yl)-L-homocysteine = (S)-4,5-dihydroxypentane-2,3-dione + L-homocysteine. Functionally, involved in the synthesis of autoinducer 2 (AI-2) which is secreted by bacteria and is used to communicate both the cell density and the metabolic potential of the environment. The regulation of gene expression in response to changes in cell density is called quorum sensing. Catalyzes the transformation of S-ribosylhomocysteine (RHC) to homocysteine (HC) and 4,5-dihydroxy-2,3-pentadione (DPD). This Shewanella pealeana (strain ATCC 700345 / ANG-SQ1) protein is S-ribosylhomocysteine lyase.